We begin with the raw amino-acid sequence, 278 residues long: Putative cysteine-rich repeat secretory protein 17 (278 aa).

A signal peptide spans 1 to 32 (MYSLSSVSKHLILVHILALVATQLLLIRSVSS). 2 consecutive Gnk2-homologous domains span residues 39-142 (YLNH…SIDN) and 148-265 (YGDS…LYPF).

This sequence belongs to the cysteine-rich repeat secretory protein family.

The protein resides in the secreted. The sequence is that of Putative cysteine-rich repeat secretory protein 17 (CRRSP17) from Arabidopsis thaliana (Mouse-ear cress).